A 130-amino-acid polypeptide reads, in one-letter code: Small ribosomal subunit protein uS11 (130 aa).

A disordered region spans residues 109–130 (EDITPIPHDGTGRPGGKRGRRV).

This sequence belongs to the universal ribosomal protein uS11 family. In terms of assembly, part of the 30S ribosomal subunit.

Located on the platform of the 30S subunit. This Methanobrevibacter smithii (strain ATCC 35061 / DSM 861 / OCM 144 / PS) protein is Small ribosomal subunit protein uS11.